The following is a 235-amino-acid chain: 5'-methylthioadenosine/S-adenosylhomocysteine nucleosidase (235 aa).

The active-site Proton acceptor is the Glu-13. Substrate contacts are provided by residues Gly-79, Met-154, and 175–176; that span reads ME. The Proton donor role is filled by Asp-199.

It belongs to the PNP/UDP phosphorylase family. MtnN subfamily.

It catalyses the reaction S-adenosyl-L-homocysteine + H2O = S-(5-deoxy-D-ribos-5-yl)-L-homocysteine + adenine. It carries out the reaction S-methyl-5'-thioadenosine + H2O = 5-(methylsulfanyl)-D-ribose + adenine. The enzyme catalyses 5'-deoxyadenosine + H2O = 5-deoxy-D-ribose + adenine. It participates in amino-acid biosynthesis; L-methionine biosynthesis via salvage pathway; S-methyl-5-thio-alpha-D-ribose 1-phosphate from S-methyl-5'-thioadenosine (hydrolase route): step 1/2. Functionally, catalyzes the irreversible cleavage of the glycosidic bond in both 5'-methylthioadenosine (MTA) and S-adenosylhomocysteine (SAH/AdoHcy) to adenine and the corresponding thioribose, 5'-methylthioribose and S-ribosylhomocysteine, respectively. Also cleaves 5'-deoxyadenosine, a toxic by-product of radical S-adenosylmethionine (SAM) enzymes, into 5-deoxyribose and adenine. The protein is 5'-methylthioadenosine/S-adenosylhomocysteine nucleosidase of Chromohalobacter salexigens (strain ATCC BAA-138 / DSM 3043 / CIP 106854 / NCIMB 13768 / 1H11).